Consider the following 522-residue polypeptide: MLTVPPLIPRLLLALTPLATIAAAFFYFSQTNVLQPTPYIDEIFHIPQTQQYCKGHWNAWDSKITTPPGLYIIGYAWARMLTLTGLSESEACSTLSLRAVNLMAVVIYIPATLYIIQRRVWGSQAHFSAFSLVSFPLIWFYAALYYTDVWSTATVLMALAFALSPRVPFYMVQLSALMCAVSLFFRQTNILWAAVVAVIAIENSHYSNGAPPKNGALAQIFSTISYTFQIELPIFNILISYASVAVGFSFFLYINGGIALGDKDNHVAGNHIPQVFYCALFITTLGFPVWFTWAHLKAYISSSFSVLGLTVRPLFIFVLIPRLLKSYAIEHPFLLADNRHYVFYLWRRLLKPAIYSISVEDVMQSQDAIDPKTLDVISIGLKYALSAAIYFSLWNIWTTLTNSIPAAILVRGRGFNRRNGKSISPAIDLQCLTWPILLAMVFATLASLIPSPLIEPRYYILPYLFWRIYMTPTTAGKRVNTDARFLREWIWYMLINAATVYMFLYKPFEWAHEPGVLQRFMW.

Helical transmembrane passes span 8–28 (IPRL…FFYF), 96–116 (SLRA…LYII), 125–145 (AHFS…AALY), 152–172 (TATV…FYMV), 181–201 (VSLF…VIAI), 234–254 (IFNI…FLYI), 275–295 (VFYC…TWAH), 300–320 (ISSS…FVLI), 388–410 (AIYF…AILV), 434–454 (WPIL…SPLI), and 488–508 (EWIW…YKPF).

Belongs to the ALG10 glucosyltransferase family.

The protein resides in the endoplasmic reticulum membrane. The enzyme catalyses an alpha-D-Glc-(1-&gt;3)-alpha-D-Glc-(1-&gt;3)-alpha-D-Man-(1-&gt;2)-alpha-D-Man-(1-&gt;2)-alpha-D-Man-(1-&gt;3)-[alpha-D-Man-(1-&gt;2)-alpha-D-Man-(1-&gt;3)-[alpha-D-Man-(1-&gt;2)-alpha-D-Man-(1-&gt;6)]-alpha-D-Man-(1-&gt;6)]-beta-D-Man-(1-&gt;4)-beta-D-GlcNAc-(1-&gt;4)-alpha-D-GlcNAc-diphospho-di-trans,poly-cis-dolichol + a di-trans,poly-cis-dolichyl beta-D-glucosyl phosphate = a alpha-D-Glc-(1-&gt;2)-alpha-D-Glc-(1-&gt;3)-alpha-D-Glc-(1-&gt;3)-alpha-D-Man-(1-&gt;2)-alpha-D-Man-(1-&gt;2)-alpha-D-Man-(1-&gt;3)-[alpha-D-Man-(1-&gt;2)-alpha-D-Man-(1-&gt;3)-[alpha-D-Man-(1-&gt;2)-alpha-D-Man-(1-&gt;6)]-alpha-D-Man-(1-&gt;6)]-beta-D-Man-(1-&gt;4)-beta-D-GlcNAc-(1-&gt;4)-alpha-D-GlcNAc-diphospho-di-trans,poly-cis-dolichol + a di-trans,poly-cis-dolichyl phosphate + H(+). It participates in protein modification; protein glycosylation. Functionally, dol-P-Glc:Glc(2)Man(9)GlcNAc(2)-PP-Dol alpha-1,2-glucosyltransferase that operates in the biosynthetic pathway of dolichol-linked oligosaccharides, the glycan precursors employed in protein asparagine (N)-glycosylation. The assembly of dolichol-linked oligosaccharides begins on the cytosolic side of the endoplasmic reticulum membrane and finishes in its lumen. The sequential addition of sugars to dolichol pyrophosphate produces dolichol-linked oligosaccharides containing fourteen sugars, including two GlcNAcs, nine mannoses and three glucoses. Once assembled, the oligosaccharide is transferred from the lipid to nascent proteins by oligosaccharyltransferases. In the lumen of the endoplasmic reticulum, adds the third and last glucose residue from dolichyl phosphate glucose (Dol-P-Glc) onto the lipid-linked oligosaccharide intermediate Glc(2)Man(9)GlcNAc(2)-PP-Dol to produce Glc(3)Man(9)GlcNAc(2)-PP-Dol. This chain is Dol-P-Glc:Glc(2)Man(9)GlcNAc(2)-PP-Dol alpha-1,2-glucosyltransferase (ALG10), found in Yarrowia lipolytica (strain CLIB 122 / E 150) (Yeast).